We begin with the raw amino-acid sequence, 71 residues long: Large ribosomal subunit protein uL30 (71 aa).

This sequence belongs to the universal ribosomal protein uL30 family. Part of the 50S ribosomal subunit.

This chain is Large ribosomal subunit protein uL30, found in Mycobacterium leprae (strain TN).